Consider the following 126-residue polypeptide: Aspartate 1-decarboxylase (126 aa).

S25 functions as the Schiff-base intermediate with substrate; via pyruvic acid in the catalytic mechanism. At S25 the chain carries Pyruvic acid (Ser). T57 contacts substrate. Y58 (proton donor) is an active-site residue. 73 to 75 lines the substrate pocket; it reads GSA.

It belongs to the PanD family. As to quaternary structure, heterooctamer of four alpha and four beta subunits. It depends on pyruvate as a cofactor. Is synthesized initially as an inactive proenzyme, which is activated by self-cleavage at a specific serine bond to produce a beta-subunit with a hydroxyl group at its C-terminus and an alpha-subunit with a pyruvoyl group at its N-terminus.

It is found in the cytoplasm. The catalysed reaction is L-aspartate + H(+) = beta-alanine + CO2. It functions in the pathway cofactor biosynthesis; (R)-pantothenate biosynthesis; beta-alanine from L-aspartate: step 1/1. In terms of biological role, catalyzes the pyruvoyl-dependent decarboxylation of aspartate to produce beta-alanine. The polypeptide is Aspartate 1-decarboxylase (Chromobacterium violaceum (strain ATCC 12472 / DSM 30191 / JCM 1249 / CCUG 213 / NBRC 12614 / NCIMB 9131 / NCTC 9757 / MK)).